Here is a 255-residue protein sequence, read N- to C-terminus: uncharacterized protein (255 aa).

The N-terminal stretch at 1–18 is a signal peptide; it reads MRILIILSIILCSLFTKA.

The protein belongs to the MlaA family.

This is an uncharacterized protein from Rickettsia bellii (strain RML369-C).